The sequence spans 328 residues: Gonadotropin-releasing hormone receptor (328 aa).

The Extracellular segment spans residues 1–38 (MANRAYLEQKQTQCSIINSSFSMTHRDLPTLTLSGKIR). Asn18 carries an N-linked (GlcNAc...) asparagine glycan. Residues 39 to 58 (VMVTFFLFLVSTAFNASFLM) traverse the membrane as a helical segment. At 59-77 (KLQRQTQKKEEVKKLTRMK) the chain is on the cytoplasmic side. A helical membrane pass occupies residues 78–97 (VLLKHLTLANLLETVIVMPL). Over 98–115 (DGIWNVTVQWYAGEFLCK) the chain is Extracellular. A glycan (N-linked (GlcNAc...) asparagine) is linked at Asn102. Residues Cys114 and Cys196 are joined by a disulfide bond. A helical membrane pass occupies residues 116–137 (ALSYLKLFSMYAPAFMMVVISL). Residues 138 to 164 (DRFLAITRPLAVKSNTKVGQSLIAVAW) lie on the Cytoplasmic side of the membrane. A helical transmembrane segment spans residues 165 to 184 (FLSIVLAGPQLYIFRMIYVE). The Extracellular segment spans residues 185-212 (DISGQTGNFSQCVTHCSFPEWWQEAFYN). A glycan (N-linked (GlcNAc...) asparagine) is linked at Asn192. Residues 213-232 (LLTFSCLFIGPLLIMLVCNA) traverse the membrane as a helical segment. The Cytoplasmic segment spans residues 233–281 (KIIFTLTQVLHQDPHELQLNRSKNNIPRARLRTLKMTVAFATLFTICWT). A helical membrane pass occupies residues 282-300 (PYYVLGIWYWFDPEMLNRV). Residues 301 to 306 (SDPVNH) are Extracellular-facing. A helical membrane pass occupies residues 307 to 326 (FFFLFGLLNPCFDPLIYGYF). The Cytoplasmic portion of the chain corresponds to 327-328 (SL).

The protein belongs to the G-protein coupled receptor 1 family.

It localises to the cell membrane. Its function is as follows. Receptor for gonadotropin releasing hormone (GnRH) that mediates the action of GnRH to stimulate the secretion of the gonadotropic hormones luteinizing hormone (LH) and follicle-stimulating hormone (FSH). This receptor mediates its action by association with G-proteins that activate a phosphatidylinositol-calcium second messenger system. This Trichosurus vulpecula (Brush-tailed possum) protein is Gonadotropin-releasing hormone receptor (GNRHR).